The chain runs to 142 residues: 5a,11a-dehydrotetracycline/5a,11a-dehydrooxytetracycline reductase (142 aa).

It belongs to the pyridoxamine 5'-phosphate oxidase family.

The catalysed reaction is tetracycline + oxidized coenzyme F420-(gamma-L-Glu)(n) + H(+) = 5a,11a-dehydrotetracycline + reduced coenzyme F420-(gamma-L-Glu)(n). The enzyme catalyses oxytetracycline + oxidized coenzyme F420-(gamma-L-Glu)(n) + H(+) = 5a,11a-dehydrooxytetracycline + reduced coenzyme F420-(gamma-L-Glu)(n). Its pathway is antibiotic biosynthesis; oxytetracycline biosynthesis. Its function is as follows. Involved in the biosynthesis of the antibiotics tetracycline and oxytetracycline. Catalyzes the C(5) reduction of 5a,11a-dehydrooxytetracycline to yield oxytetracycline as a major product. Also catalyzes the C(12) reduction of 5a,11a-dehydrotetracycline (12-dehydrotetracycline) to produce tetracycline as a minor product. This chain is 5a,11a-dehydrotetracycline/5a,11a-dehydrooxytetracycline reductase, found in Streptomyces rimosus subsp. rimosus (strain ATCC 10970 / DSM 40260 / JCM 4667 / NRRL 2234).